Here is a 623-residue protein sequence, read N- to C-terminus: Frizzled and smoothened-like protein M (623 aa).

The signal sequence occupies residues 1 to 18 (MKSIFIIIFILYVFQVNS). The Extracellular portion of the chain corresponds to 19-243 (QTIYPIDPSG…WDQLYNLSNT (225 aa)). Positions 25-163 (DPSGKCEQYI…NYSEFNLTNY (139 aa)) constitute an FZ domain. 2 cysteine pairs are disulfide-bonded: Cys30–Cys100 and Cys42–Cys93. 8 N-linked (GlcNAc...) asparagine glycosylation sites follow: Asn57, Asn106, Asn109, Asn154, Asn159, Asn169, Asn199, and Asn239. The chain crosses the membrane as a helical span at residues 244–264 (LAVLSTFGSLYLLVTFIILNP). Topologically, residues 265–273 (KVTSFDRMY) are cytoplasmic. Residues 274 to 294 (GFFNGSVFMMSLSGVILFIAG) traverse the membrane as a helical segment. Over 295 to 317 (GPRALIKDGGARISVFEDPLCSS) the chain is Extracellular. Residues 318-338 (TGFIFQLFAINAILFWAYMGF) traverse the membrane as a helical segment. Residues 339–354 (DLWWRVKYITKPLNIQ) lie on the Cytoplasmic side of the membrane. Residues 355 to 375 (KYYVPIAFTISFIFSVIPLAT) form a helical membrane-spanning segment. The Extracellular segment spans residues 376–397 (KNYRMVRGNIHCWVHKAVLQNT). Residues 398–418 (LFFGPLGLTLTISTGFIGLVI) form a helical membrane-spanning segment. At 419 to 439 (YEIYKIVKATGRGGIMKLEIK) the chain is on the cytoplasmic side. The chain crosses the membrane as a helical span at residues 440-460 (PILNIVLIYFSFVYIFAFNFH). Over 461-494 (NDNNSKNTYGSIDEFFQCTLESDDPSKCTVGGPS) the chain is Extracellular. N-linked (GlcNAc...) asparagine glycosylation occurs at Asn463. The chain crosses the membrane as a helical span at residues 495-515 (IGSLGYFIYCIRIYGIYCFFL). The Cytoplasmic segment spans residues 516 to 623 (QGLNERAFKI…DIEIGSVNIK (108 aa)). The disordered stretch occupies residues 552-590 (PSESGNSSTTAGTSTTINNSNINKKNNNSKPTLSTMDSN). A compositionally biased stretch (low complexity) spans 555–580 (SGNSSTTAGTSTTINNSNINKKNNNS).

It belongs to the G-protein coupled receptor Fz/Smo family.

The protein resides in the membrane. The sequence is that of Frizzled and smoothened-like protein M (fslM-1) from Dictyostelium discoideum (Social amoeba).